Here is a 72-residue protein sequence, read N- to C-terminus: MGKQPVKLKAVVYAISPFQQKIMPGLWKDLPGKIHHKVSENWISATLLLGPLVGTYSYVQHFLEKEKLEHRY.

Topologically, residues 2–41 (GKQPVKLKAVVYAISPFQQKIMPGLWKDLPGKIHHKVSEN) are mitochondrial matrix. A helical membrane pass occupies residues 42-59 (WISATLLLGPLVGTYSYV). At 60-72 (QHFLEKEKLEHRY) the chain is on the mitochondrial intermembrane side.

The protein belongs to the UQCRQ/QCR8 family. Component of the ubiquinol-cytochrome c oxidoreductase (cytochrome b-c1 complex, complex III, CIII), a multisubunit enzyme composed of 3 respiratory subunits cytochrome b, cytochrome c1 and Rieske protein, 2 core protein subunits, and additional low-molecular weight protein subunits. The complex exists as an obligatory dimer and forms supercomplexes (SCs) in the inner mitochondrial membrane with cytochrome c oxidase (complex IV, CIV).

The protein resides in the mitochondrion inner membrane. Functionally, component of the ubiquinol-cytochrome c oxidoreductase, a multisubunit transmembrane complex that is part of the mitochondrial electron transport chain which drives oxidative phosphorylation. The respiratory chain contains 3 multisubunit complexes succinate dehydrogenase (complex II, CII), ubiquinol-cytochrome c oxidoreductase (cytochrome b-c1 complex, complex III, CIII) and cytochrome c oxidase (complex IV, CIV), that cooperate to transfer electrons derived from NADH and succinate to molecular oxygen, creating an electrochemical gradient over the inner membrane that drives transmembrane transport and the ATP synthase. The cytochrome b-c1 complex catalyzes electron transfer from ubiquinol to cytochrome c, linking this redox reaction to translocation of protons across the mitochondrial inner membrane, with protons being carried across the membrane as hydrogens on the quinol. In the process called Q cycle, 2 protons are consumed from the matrix, 4 protons are released into the intermembrane space and 2 electrons are passed to cytochrome c. In Solanum tuberosum (Potato), this protein is Cytochrome b-c1 complex subunit 8.